Reading from the N-terminus, the 345-residue chain is Trace amine-associated receptor 6 (345 aa).

Residues 1–32 (MGSNSSPPTVLQLCYENVTGSCVKTPYSPGSR) are Extracellular-facing. Residue N17 is glycosylated (N-linked (GlcNAc...) asparagine). 2 disulfide bridges follow: C22-C186 and C105-C190. Residues 33-53 (VILYAVFGFGAVLAVFGNLMV) form a helical membrane-spanning segment. Over 54–68 (MISILHFKQLHSPTN) the chain is Cytoplasmic. The chain crosses the membrane as a helical span at residues 69–89 (FLIASLACADFGVGISVMPFS). At 90 to 107 (MVRSIESCWYFGRSFCTF) the chain is on the extracellular side. The helical transmembrane segment at 108-128 (HTCCDVAFCYSSLFHLSFISI) threads the bilayer. The Cytoplasmic segment spans residues 129–147 (DRYIAVTDPLVYPTKFTVS). A helical membrane pass occupies residues 148 to 168 (VSGICIGVSWILPLVYSGAVF). The Extracellular segment spans residues 169 to 202 (YTGVYDDGLEELSSALNCVGGCQVVVNQNWVLID). The segment at 174 to 187 (DDGLEELSSALNCV) is extracellular Loop 2 (ECL2). A helical transmembrane segment spans residues 203–223 (FLSFLIPTLVMIILYGNIFLV). At 224–259 (ARQQAKKIENIGSKTESSSESYKARVARRERKAAKT) the chain is on the cytoplasmic side. A helical transmembrane segment spans residues 260–276 (LGITVVAFMISWLPYSI). At 277-282 (DSLVDA) the chain is on the extracellular side. Residues 283 to 302 (FMGFITPAYIYEICVWCAYY) traverse the membrane as a helical segment. At 303-345 (NSAMNPLIYALFYPWFKKAIKVIMSGQVFKNSSATMNLFSEQI) the chain is on the cytoplasmic side.

This sequence belongs to the G-protein coupled receptor 1 family. In terms of tissue distribution, specifically expressed in neurons of the olfactory epithelium, to discrete glomeruli predominantly localized to a confined bulb region. Present in a ventral area of the main olfactory epithelium.

Its subcellular location is the cell membrane. Its function is as follows. Olfactory receptor specific for trace amines, such as beta-phenylethylamine (beta-PEA). Trace amine compounds are enriched in animal body fluids and act on trace amine-associated receptors (TAARs) to elicit both intraspecific and interspecific innate behaviors. Beta-PEA-binding causes a conformation change that triggers signaling via G(s)-class of G alpha proteins (GNAL or GNAS). The polypeptide is Trace amine-associated receptor 6 (Mus musculus (Mouse)).